The sequence spans 210 residues: Holliday junction branch migration complex subunit RuvA (210 aa).

The domain I stretch occupies residues 1–64 (MIGLIEGRVC…EDAQLLYGFL (64 aa)). Residues 65–143 (HPTERDVFRQ…HIQSDMSLLT (79 aa)) form a domain II region. A flexible linker region spans residues 144–154 (EVEQQIGIAAN). The domain III stretch occupies residues 155 to 210 (SEGVILAEVESALISLGYRDKEAQQAIKAARETDAGQQLVDTQSLLKLTLKQLSNF).

Belongs to the RuvA family. In terms of assembly, homotetramer. Forms an RuvA(8)-RuvB(12)-Holliday junction (HJ) complex. HJ DNA is sandwiched between 2 RuvA tetramers; dsDNA enters through RuvA and exits via RuvB. An RuvB hexamer assembles on each DNA strand where it exits the tetramer. Each RuvB hexamer is contacted by two RuvA subunits (via domain III) on 2 adjacent RuvB subunits; this complex drives branch migration. In the full resolvosome a probable DNA-RuvA(4)-RuvB(12)-RuvC(2) complex forms which resolves the HJ.

The protein localises to the cytoplasm. Its function is as follows. The RuvA-RuvB-RuvC complex processes Holliday junction (HJ) DNA during genetic recombination and DNA repair, while the RuvA-RuvB complex plays an important role in the rescue of blocked DNA replication forks via replication fork reversal (RFR). RuvA specifically binds to HJ cruciform DNA, conferring on it an open structure. The RuvB hexamer acts as an ATP-dependent pump, pulling dsDNA into and through the RuvAB complex. HJ branch migration allows RuvC to scan DNA until it finds its consensus sequence, where it cleaves and resolves the cruciform DNA. The protein is Holliday junction branch migration complex subunit RuvA of Psychrobacter sp. (strain PRwf-1).